The sequence spans 556 residues: Set1/Ash2 histone methyltransferase complex subunit ASH2 (556 aa).

Polar residues predominate over residues 1–19 (MEDSQMDTSSPTESSSEVN). The tract at residues 1–27 (MEDSQMDTSSPTESSSEVNFTAEEDKS) is disordered. Residues 34–90 (AGVCYCGKERNLNIVELLCATCSRWVHETCVSYQLGKGKLLPFITNYVFVCKNCSAS) form a PHD-type zinc finger. Zn(2+)-binding residues include Cys-37, Cys-39, Cys-52, Cys-55, His-60, Cys-63, Cys-84, and Cys-87. The disordered stretch occupies residues 216–251 (ASLSKNNRQKRKFPGTDSGPTGKKGRPSSDITANVK). Residues 288–510 (SSDWAGKPIP…VSVNFGPAFK (223 aa)) enclose the B30.2/SPRY domain.

Core component of several methyltransferase-containing complexes. Component of the SET1C/COMPASS complex, composed at least of the catalytic subunit Set1, wds/WDR5, Wdr82, Rbbp5, ash2, Cfp1/CXXC1, hcf and Dpy-30L1. Component of the MLL3/4 (Histone-lysine N-methyltransferase/demethylase TRR) complex composed at least of the catalytic subunit trr, ash2, Rbbp5, Dpy-30L1, wds, hcf, ptip, Pa1, Utx, Lpt and Ncoa6. Interacts with hcf. Interacts with trr. In terms of assembly, interacts (via B30.2/SPRY domain) with sktl; the interaction is direct. In terms of tissue distribution, in larvae and pupae, expressed in imaginal disks, salivary gland and fat body cells. No expression detected in central nervous system (at protein level).

It localises to the nucleus. The protein localises to the chromosome. Its function is as follows. Transcriptional regulator. Regulates a number of genes involved in wing development including activation of net and bs and repression of rho and kni and controls vein-intervein patterning during wing development. Required for correct expression of a number of homeotic genes including Scr in the first leg imaginal disk and Ubx in the third leg imaginal disk and haltere disks. Required for stabilization of the histone-lysine N-methyltransferase trr and for trimethylation of 'Lys-4' of histone H3. Together with sktl probably plays a role in maintenance of transcriptionally active chromatin through down-regulation of histone H1 hyperphosphorylation. The protein is Set1/Ash2 histone methyltransferase complex subunit ASH2 of Drosophila melanogaster (Fruit fly).